A 594-amino-acid polypeptide reads, in one-letter code: UvrABC system protein C (594 aa).

A GIY-YIG domain is found at 14–91 (DQPGCYLMKD…IKKHDPKYNI (78 aa)). The UVR domain maps to 196 to 231 (KEVRSELETKMYEASEKLEFERAKELRDQIAHIDAI).

The protein belongs to the UvrC family. As to quaternary structure, interacts with UvrB in an incision complex.

It localises to the cytoplasm. Functionally, the UvrABC repair system catalyzes the recognition and processing of DNA lesions. UvrC both incises the 5' and 3' sides of the lesion. The N-terminal half is responsible for the 3' incision and the C-terminal half is responsible for the 5' incision. This is UvrABC system protein C from Bacillus anthracis (strain A0248).